Consider the following 451-residue polypeptide: Cysteine protease ATG4 (451 aa).

Residue Cys122 is the Nucleophile of the active site. Active-site residues include Asp297 and His299.

Belongs to the peptidase C54 family. As to quaternary structure, interacts with ATG8.

The protein localises to the cytoplasm. It is found in the nucleus. The protein resides in the preautophagosomal structure. The enzyme catalyses [protein]-C-terminal L-amino acid-glycyl-phosphatidylethanolamide + H2O = [protein]-C-terminal L-amino acid-glycine + a 1,2-diacyl-sn-glycero-3-phosphoethanolamine. Its function is as follows. Cysteine protease that plays a key role in cytoplasm to vacuole transport (Cvt) and autophagy by mediating both proteolytic activation and delipidation of ATG8. Required for selective autophagic degradation of the nucleus (nucleophagy) as well as for mitophagy which contributes to regulate mitochondrial quantity and quality by eliminating the mitochondria to a basal level to fulfill cellular energy requirements and preventing excess ROS production. The protease activity is required for proteolytic activation of ATG8: cleaves the C-terminal amino acid of ATG8 to reveal a C-terminal glycine. ATG8 ubiquitin-like activity requires the exposure of the glycine at the C-terminus for its conjugation to phosphatidylethanolamine (PE) and its insertion to membranes, which is necessary for autophagy. The ATG8-PE conjugate mediates tethering between adjacent membranes and stimulates membrane hemifusion, leading to expansion of the autophagosomal membrane during autophagy. In addition to the protease activity, also catalyzes deconjugation of PE-conjugated forms of ATG8 during macroautophagy: ATG8 delipidation is required to release the protein from membranes, which facilitates multiple events during macroautophagy, and especially for efficient autophagosome biogenesis, the assembly of ATG9-containing tubulovesicular clusters into phagophores/autophagosomes, and for the disassembly of PAS-associated ATG components. ATG8 delipidation by ATG4 also recycles ATG8-PE generated on inappropriate membranes to maintain a reservoir of unlipidated ATG8 that is required for autophagosome formation at the PAS. This is Cysteine protease ATG4 from Kluyveromyces marxianus (strain DMKU3-1042 / BCC 29191 / NBRC 104275) (Yeast).